The following is a 382-amino-acid chain: S-adenosylmethionine synthase (382 aa).

Residue His-15 participates in ATP binding. Asp-17 provides a ligand contact to Mg(2+). K(+) is bound at residue Glu-43. L-methionine-binding residues include Glu-56 and Gln-99. The tract at residues 99 to 109 (QSPDINQGVDR) is flexible loop. ATP is bound by residues 164–166 (DAK), 230–231 (RF), Asp-239, 245–246 (RK), Ala-262, and Lys-266. Asp-239 is a binding site for L-methionine. Residue Lys-270 coordinates L-methionine.

This sequence belongs to the AdoMet synthase family. As to quaternary structure, homotetramer; dimer of dimers. Requires Mg(2+) as cofactor. K(+) is required as a cofactor.

It is found in the cytoplasm. The enzyme catalyses L-methionine + ATP + H2O = S-adenosyl-L-methionine + phosphate + diphosphate. It participates in amino-acid biosynthesis; S-adenosyl-L-methionine biosynthesis; S-adenosyl-L-methionine from L-methionine: step 1/1. In terms of biological role, catalyzes the formation of S-adenosylmethionine (AdoMet) from methionine and ATP. The overall synthetic reaction is composed of two sequential steps, AdoMet formation and the subsequent tripolyphosphate hydrolysis which occurs prior to release of AdoMet from the enzyme. This chain is S-adenosylmethionine synthase, found in Psychromonas ingrahamii (strain DSM 17664 / CCUG 51855 / 37).